The primary structure comprises 464 residues: ATP synthase subunit beta (464 aa).

Residue 152–159 (GGAGVGKT) participates in ATP binding.

Belongs to the ATPase alpha/beta chains family. As to quaternary structure, F-type ATPases have 2 components, CF(1) - the catalytic core - and CF(0) - the membrane proton channel. CF(1) has five subunits: alpha(3), beta(3), gamma(1), delta(1), epsilon(1). CF(0) has three main subunits: a(1), b(2) and c(9-12). The alpha and beta chains form an alternating ring which encloses part of the gamma chain. CF(1) is attached to CF(0) by a central stalk formed by the gamma and epsilon chains, while a peripheral stalk is formed by the delta and b chains.

The protein resides in the cell inner membrane. The enzyme catalyses ATP + H2O + 4 H(+)(in) = ADP + phosphate + 5 H(+)(out). In terms of biological role, produces ATP from ADP in the presence of a proton gradient across the membrane. The catalytic sites are hosted primarily by the beta subunits. The polypeptide is ATP synthase subunit beta (Aliarcobacter butzleri (strain RM4018) (Arcobacter butzleri)).